The sequence spans 477 residues: Probable cytosolic Fe-S cluster assembly factor GK14772 (477 aa).

[4Fe-4S] cluster is bound by residues C23, C69, C72, C75, C188, C244, C396, and C400.

This sequence belongs to the NARF family.

Its function is as follows. Component of the cytosolic iron-sulfur (Fe/S) protein assembly machinery. Required for maturation of extramitochondrial Fe/S proteins. The protein is Probable cytosolic Fe-S cluster assembly factor GK14772 of Drosophila willistoni (Fruit fly).